The chain runs to 365 residues: UPF0718 protein MJ0584 (365 aa).

The next 11 helical transmembrane spans lie at 6 to 26, 32 to 52, 67 to 87, 108 to 128, 130 to 150, 174 to 194, 201 to 221, 245 to 265, 282 to 302, 308 to 328, and 344 to 364; these read MSFIMNIINVMINTIIDYLNV, LLMAFLMAGGIASMINKNFII, VAAVSGSLLAVCSCTILPLFA, AINVLAIFYSAALLGWDIGFL, AVFAVVVSILIGLSMEIIFKS, ITFFALQFIMLLVITASPKLF, LYDGFLLKHLLFIILGIILAV, IVFPLLIIGVAIAGAIKAIIP, FIASFIGALMYFATLTEVPII, LGMGVGPAMALLLAGPSLSIP, and TYLGLVVIFSTICGYIAGIIL.

It belongs to the UPF0718 family.

It is found in the cell membrane. The polypeptide is UPF0718 protein MJ0584 (Methanocaldococcus jannaschii (strain ATCC 43067 / DSM 2661 / JAL-1 / JCM 10045 / NBRC 100440) (Methanococcus jannaschii)).